The chain runs to 291 residues: MEMO1 family protein PH1626 (291 aa).

It belongs to the MEMO1 family.

This Pyrococcus horikoshii (strain ATCC 700860 / DSM 12428 / JCM 9974 / NBRC 100139 / OT-3) protein is MEMO1 family protein PH1626.